The chain runs to 194 residues: Imidazoleglycerol-phosphate dehydratase (194 aa).

It belongs to the imidazoleglycerol-phosphate dehydratase family.

It localises to the cytoplasm. The catalysed reaction is D-erythro-1-(imidazol-4-yl)glycerol 3-phosphate = 3-(imidazol-4-yl)-2-oxopropyl phosphate + H2O. It functions in the pathway amino-acid biosynthesis; L-histidine biosynthesis; L-histidine from 5-phospho-alpha-D-ribose 1-diphosphate: step 6/9. The chain is Imidazoleglycerol-phosphate dehydratase from Chloroherpeton thalassium (strain ATCC 35110 / GB-78).